The primary structure comprises 443 residues: Exodeoxyribonuclease 7 large subunit (443 aa).

Belongs to the XseA family. As to quaternary structure, heterooligomer composed of large and small subunits.

It is found in the cytoplasm. The catalysed reaction is Exonucleolytic cleavage in either 5'- to 3'- or 3'- to 5'-direction to yield nucleoside 5'-phosphates.. Bidirectionally degrades single-stranded DNA into large acid-insoluble oligonucleotides, which are then degraded further into small acid-soluble oligonucleotides. This is Exodeoxyribonuclease 7 large subunit from Legionella pneumophila (strain Corby).